Consider the following 767-residue polypeptide: Protein NLP3 (767 aa).

3 disordered regions span residues 462–494 (ATPP…RKTK), 590–622 (INPT…CSSE), and 646–672 (HEDQ…KAKD). Residues 482 to 566 (SASSLENRKR…MDSVEGVQGS (85 aa)) enclose the RWP-RK domain. Positions 485–506 (SLENRKRKTKAEKDITLDTLRQ) form a coiled coil. 2 stretches are compositionally biased toward low complexity: residues 604-622 (PSSS…CSSE) and 655-667 (TSSL…ATTP). The PB1 domain maps to 673-759 (GMKVKAMFGD…ETIRILVHHP (87 aa)).

It localises to the nucleus. Its function is as follows. Probable transcription factor. The chain is Protein NLP3 (NLP3) from Arabidopsis thaliana (Mouse-ear cress).